A 444-amino-acid polypeptide reads, in one-letter code: Gamma-glutamyl phosphate reductase (444 aa).

Belongs to the gamma-glutamyl phosphate reductase family.

The protein resides in the cytoplasm. It catalyses the reaction L-glutamate 5-semialdehyde + phosphate + NADP(+) = L-glutamyl 5-phosphate + NADPH + H(+). Its pathway is amino-acid biosynthesis; L-proline biosynthesis; L-glutamate 5-semialdehyde from L-glutamate: step 2/2. In terms of biological role, catalyzes the NADPH-dependent reduction of L-glutamate 5-phosphate into L-glutamate 5-semialdehyde and phosphate. The product spontaneously undergoes cyclization to form 1-pyrroline-5-carboxylate. The polypeptide is Gamma-glutamyl phosphate reductase (Albidiferax ferrireducens (strain ATCC BAA-621 / DSM 15236 / T118) (Rhodoferax ferrireducens)).